The sequence spans 255 residues: Type III pantothenate kinase (255 aa).

7–14 (DVGNTRLK) contributes to the ATP binding site. Substrate-binding positions include tyrosine 96 and 103–106 (GADR). Aspartate 105 functions as the Proton acceptor in the catalytic mechanism. Threonine 133 lines the ATP pocket. Threonine 183 is a binding site for substrate.

It belongs to the type III pantothenate kinase family. Homodimer. NH4(+) is required as a cofactor. It depends on K(+) as a cofactor.

The protein resides in the cytoplasm. It catalyses the reaction (R)-pantothenate + ATP = (R)-4'-phosphopantothenate + ADP + H(+). Its pathway is cofactor biosynthesis; coenzyme A biosynthesis; CoA from (R)-pantothenate: step 1/5. In terms of biological role, catalyzes the phosphorylation of pantothenate (Pan), the first step in CoA biosynthesis. In Albidiferax ferrireducens (strain ATCC BAA-621 / DSM 15236 / T118) (Rhodoferax ferrireducens), this protein is Type III pantothenate kinase.